The following is a 360-amino-acid chain: UDP-N-acetylglucosamine--N-acetylmuramyl-(pentapeptide) pyrophosphoryl-undecaprenol N-acetylglucosamine transferase (360 aa).

2 residues coordinate UDP-N-acetyl-alpha-D-glucosamine: Ser198 and Gln289.

It belongs to the glycosyltransferase 28 family. MurG subfamily.

It localises to the cell membrane. It catalyses the reaction Mur2Ac(oyl-L-Ala-gamma-D-Glu-L-Lys-D-Ala-D-Ala)-di-trans,octa-cis-undecaprenyl diphosphate + UDP-N-acetyl-alpha-D-glucosamine = beta-D-GlcNAc-(1-&gt;4)-Mur2Ac(oyl-L-Ala-gamma-D-Glu-L-Lys-D-Ala-D-Ala)-di-trans,octa-cis-undecaprenyl diphosphate + UDP + H(+). It functions in the pathway cell wall biogenesis; peptidoglycan biosynthesis. Its function is as follows. Cell wall formation. Catalyzes the transfer of a GlcNAc subunit on undecaprenyl-pyrophosphoryl-MurNAc-pentapeptide (lipid intermediate I) to form undecaprenyl-pyrophosphoryl-MurNAc-(pentapeptide)GlcNAc (lipid intermediate II). The protein is UDP-N-acetylglucosamine--N-acetylmuramyl-(pentapeptide) pyrophosphoryl-undecaprenol N-acetylglucosamine transferase of Streptococcus pyogenes serotype M12 (strain MGAS2096).